A 562-amino-acid chain; its full sequence is Probable malate:quinone oxidoreductase (562 aa).

It belongs to the MQO family. Requires FAD as cofactor.

The catalysed reaction is (S)-malate + a quinone = a quinol + oxaloacetate. Its pathway is carbohydrate metabolism; tricarboxylic acid cycle; oxaloacetate from (S)-malate (quinone route): step 1/1. The polypeptide is Probable malate:quinone oxidoreductase (Stenotrophomonas maltophilia (strain K279a)).